A 502-amino-acid chain; its full sequence is Glycerol kinase (502 aa).

An ADP-binding site is contributed by threonine 14. ATP is bound by residues threonine 14, threonine 15, and serine 16. Threonine 14 is a sn-glycerol 3-phosphate binding site. Position 18 (arginine 18) interacts with ADP. Arginine 84, glutamate 85, tyrosine 136, and aspartate 246 together coordinate sn-glycerol 3-phosphate. Glycerol contacts are provided by arginine 84, glutamate 85, tyrosine 136, aspartate 246, and glutamine 247. 2 residues coordinate ADP: threonine 268 and glycine 311. Residues threonine 268, glycine 311, glutamine 315, and glycine 412 each contribute to the ATP site. ADP is bound by residues glycine 412 and asparagine 416.

This sequence belongs to the FGGY kinase family. In terms of assembly, homotetramer and homodimer (in equilibrium). Heterodimer with EIIA-Glc. Binds 1 zinc ion per glycerol kinase EIIA-Glc dimer. The zinc ion is important for dimerization.

The enzyme catalyses glycerol + ATP = sn-glycerol 3-phosphate + ADP + H(+). It functions in the pathway polyol metabolism; glycerol degradation via glycerol kinase pathway; sn-glycerol 3-phosphate from glycerol: step 1/1. Its activity is regulated as follows. Activity of this regulatory enzyme is affected by several metabolites. Allosterically and non-competitively inhibited by fructose 1,6-bisphosphate (FBP) and unphosphorylated phosphocarrier protein EIIA-Glc (III-Glc), an integral component of the bacterial phosphotransferase (PTS) system. Functionally, key enzyme in the regulation of glycerol uptake and metabolism. Catalyzes the phosphorylation of glycerol to yield sn-glycerol 3-phosphate. This chain is Glycerol kinase, found in Escherichia coli O8 (strain IAI1).